We begin with the raw amino-acid sequence, 581 residues long: 4-hydroxy-3-methylbut-2-en-1-yl diphosphate synthase (flavodoxin) (581 aa).

Positions 489, 492, 523, and 530 each coordinate [4Fe-4S] cluster.

This sequence belongs to the IspG family. It depends on [4Fe-4S] cluster as a cofactor.

It carries out the reaction (2E)-4-hydroxy-3-methylbut-2-enyl diphosphate + oxidized [flavodoxin] + H2O + 2 H(+) = 2-C-methyl-D-erythritol 2,4-cyclic diphosphate + reduced [flavodoxin]. The protein operates within isoprenoid biosynthesis; isopentenyl diphosphate biosynthesis via DXP pathway; isopentenyl diphosphate from 1-deoxy-D-xylulose 5-phosphate: step 5/6. Functionally, converts 2C-methyl-D-erythritol 2,4-cyclodiphosphate (ME-2,4cPP) into 1-hydroxy-2-methyl-2-(E)-butenyl 4-diphosphate. This Porphyromonas gingivalis (strain ATCC BAA-308 / W83) protein is 4-hydroxy-3-methylbut-2-en-1-yl diphosphate synthase (flavodoxin).